Here is a 68-residue protein sequence, read N- to C-terminus: ATP synthase F(0) complex subunit 8 (68 aa).

A helical transmembrane segment spans residues threonine 8 to phenylalanine 24. An N6-acetyllysine; alternate modification is found at lysine 54. Residue lysine 54 is modified to N6-succinyllysine; alternate. Residue lysine 57 is modified to N6-acetyllysine.

It belongs to the ATPase protein 8 family. As to quaternary structure, component of the ATP synthase complex composed at least of ATP5F1A/subunit alpha, ATP5F1B/subunit beta, ATP5MC1/subunit c (homooctomer), MT-ATP6/subunit a, MT-ATP8/subunit 8, ATP5ME/subunit e, ATP5MF/subunit f, ATP5MG/subunit g, ATP5MK/subunit k, ATP5MJ/subunit j, ATP5F1C/subunit gamma, ATP5F1D/subunit delta, ATP5F1E/subunit epsilon, ATP5PF/subunit F6, ATP5PB/subunit b, ATP5PD/subunit d, ATP5PO/subunit OSCP. ATP synthase complex consists of a soluble F(1) head domain (subunits alpha(3) and beta(3)) - the catalytic core - and a membrane F(0) domain - the membrane proton channel (subunits c, a, 8, e, f, g, k and j). These two domains are linked by a central stalk (subunits gamma, delta, and epsilon) rotating inside the F1 region and a stationary peripheral stalk (subunits F6, b, d, and OSCP). Interacts with PRICKLE3.

It is found in the mitochondrion membrane. Functionally, subunit 8, of the mitochondrial membrane ATP synthase complex (F(1)F(0) ATP synthase or Complex V) that produces ATP from ADP in the presence of a proton gradient across the membrane which is generated by electron transport complexes of the respiratory chain. ATP synthase complex consist of a soluble F(1) head domain - the catalytic core - and a membrane F(1) domain - the membrane proton channel. These two domains are linked by a central stalk rotating inside the F(1) region and a stationary peripheral stalk. During catalysis, ATP synthesis in the catalytic domain of F(1) is coupled via a rotary mechanism of the central stalk subunits to proton translocation. In vivo, can only synthesize ATP although its ATP hydrolase activity can be activated artificially in vitro. Part of the complex F(0) domain. In Hippopotamus amphibius (Hippopotamus), this protein is ATP synthase F(0) complex subunit 8.